The primary structure comprises 183 residues: Adenine phosphoribosyltransferase (183 aa).

The protein belongs to the purine/pyrimidine phosphoribosyltransferase family. As to quaternary structure, homodimer.

It is found in the cytoplasm. The enzyme catalyses AMP + diphosphate = 5-phospho-alpha-D-ribose 1-diphosphate + adenine. The protein operates within purine metabolism; AMP biosynthesis via salvage pathway; AMP from adenine: step 1/1. In terms of biological role, catalyzes a salvage reaction resulting in the formation of AMP, that is energically less costly than de novo synthesis. This chain is Adenine phosphoribosyltransferase, found in Shewanella sp. (strain MR-7).